A 353-amino-acid chain; its full sequence is Anthranilate phosphoribosyltransferase (353 aa).

5-phospho-alpha-D-ribose 1-diphosphate-binding positions include Gly79, 82 to 83 (GD), Thr87, 89 to 92 (NIST), 107 to 115 (KHGNHSFTS), and Ser119. Gly79 is a binding site for anthranilate. Residue Ser91 participates in Mg(2+) binding. Anthranilate is bound at residue Asn110. Arg165 is an anthranilate binding site. Asp223 and Glu224 together coordinate Mg(2+).

Belongs to the anthranilate phosphoribosyltransferase family. As to quaternary structure, homodimer. Requires Mg(2+) as cofactor.

The enzyme catalyses N-(5-phospho-beta-D-ribosyl)anthranilate + diphosphate = 5-phospho-alpha-D-ribose 1-diphosphate + anthranilate. The protein operates within amino-acid biosynthesis; L-tryptophan biosynthesis; L-tryptophan from chorismate: step 2/5. Functionally, catalyzes the transfer of the phosphoribosyl group of 5-phosphorylribose-1-pyrophosphate (PRPP) to anthranilate to yield N-(5'-phosphoribosyl)-anthranilate (PRA). The chain is Anthranilate phosphoribosyltransferase from Methanococcoides burtonii (strain DSM 6242 / NBRC 107633 / OCM 468 / ACE-M).